The primary structure comprises 323 residues: Voltage-dependent calcium channel gamma-2 subunit (323 aa).

The chain crosses the membrane as a helical span at residues 10–30; the sequence is MLLTTVGAFAAFSLMTIAVGT. The N-linked (GlcNAc...) asparagine glycan is linked to Asn-48. 3 helical membrane passes run 104–124, 134–154, and 182–202; these read SSIFPILSVILLFMGGLCIAA, IILSAGIFFVSAGLSNIIGII, and FGALSFIIAEMVGVLAVHMFI. The tract at residues 233–261 is disordered; the sequence is YQRRSRSSSRSTEPSHSRDASPVGVKGFN. The residue at position 253 (Ser-253) is a Phosphoserine. At Tyr-271 the chain carries Phosphotyrosine. Thr-321 is modified (phosphothreonine; by PKA).

Belongs to the PMP-22/EMP/MP20 family. CACNG subfamily. The L-type calcium channel is composed of five subunits: alpha-1, alpha-2/delta, beta and gamma. Interacts with the PDZ domains of DLG4/PSD-95 and DLG1/SAP97. May interact with GOPC. Acts as an auxiliary subunit for AMPA-selective glutamate receptors (AMPARs). Found in a complex with GRIA1, GRIA2, GRIA3, GRIA4, CNIH2, CNIH3, CACNG3, CACNG4, CACNG5, CACNG7 and CACNG8. Interacts with GRIA1 and GRIA2. Interacts with MPP2. In terms of processing, phosphorylation of Thr-321 by PKA impairs interaction with DLG1 and DLG4. In terms of tissue distribution, brain.

The protein resides in the membrane. It localises to the synapse. Its subcellular location is the synaptosome. Functionally, regulates the trafficking and gating properties of AMPA-selective glutamate receptors (AMPARs). Promotes their targeting to the cell membrane and synapses and modulates their gating properties by slowing their rates of activation, deactivation and desensitization. Does not show subunit-specific AMPA receptor regulation and regulates all AMPAR subunits. Thought to stabilize the calcium channel in an inactivated (closed) state. This chain is Voltage-dependent calcium channel gamma-2 subunit (Cacng2), found in Mus musculus (Mouse).